Reading from the N-terminus, the 154-residue chain is Superoxide dismutase [Cu-Zn] (154 aa).

Positions 47, 49, and 64 each coordinate Cu cation. Cys58 and Cys147 form a disulfide bridge. The Zn(2+) site is built by His64, His72, His81, and Asp84. Cu cation is bound at residue His121. Basic and acidic residues predominate over residues 125–137; that stretch reads DDLGRGGNEESKK. Residues 125-147 form a disordered region; it reads DDLGRGGNEESKKTGNAGPRPAC. Arg144 lines the substrate pocket.

Belongs to the Cu-Zn superoxide dismutase family. As to quaternary structure, homodimer. Requires Cu cation as cofactor. It depends on Zn(2+) as a cofactor.

It localises to the cytoplasm. It carries out the reaction 2 superoxide + 2 H(+) = H2O2 + O2. Destroys radicals which are normally produced within the cells and which are toxic to biological systems. In Aspergillus niger (strain ATCC MYA-4892 / CBS 513.88 / FGSC A1513), this protein is Superoxide dismutase [Cu-Zn].